The chain runs to 91 residues: MKTVTMRVTGLVQGVGFRWTTQMIAQELGITGTVKNNPDGSVSIVAQGDELPLEHFIKKIKASPSVAAHVDHVDLKIIPNTEKFTRFSVVY.

One can recognise an Acylphosphatase-like domain in the interval 3 to 91 (TVTMRVTGLV…EKFTRFSVVY (89 aa)). Residues R18 and N36 contribute to the active site.

Belongs to the acylphosphatase family.

It catalyses the reaction an acyl phosphate + H2O = a carboxylate + phosphate + H(+). The protein is Acylphosphatase (acyP) of Lactobacillus johnsonii (strain CNCM I-12250 / La1 / NCC 533).